The following is a 145-amino-acid chain: Large ribosomal subunit protein uL14m (145 aa).

A mitochondrion-targeting transit peptide spans 1 to 30; it reads MAVLTGLFGFFAYVRGAVSQRCFSTSGSLS.

It belongs to the universal ribosomal protein uL14 family. In terms of assembly, component of the mitochondrial ribosome large subunit (39S) which comprises a 16S rRNA and about 50 distinct proteins. Interacts with MALSU1.

The protein resides in the mitochondrion. In terms of biological role, may form part of 2 intersubunit bridges in the assembled ribosome. Upon binding to MALSU1, intersubunit bridge formation is blocked, preventing ribosome formation and repressing translation. The chain is Large ribosomal subunit protein uL14m (Mrpl14) from Rattus norvegicus (Rat).